Consider the following 361-residue polypeptide: tRNA(Ile)-lysidine synthase (361 aa).

32 to 37 (SGGPDS) is an ATP binding site.

The protein belongs to the tRNA(Ile)-lysidine synthase family.

It is found in the cytoplasm. The catalysed reaction is cytidine(34) in tRNA(Ile2) + L-lysine + ATP = lysidine(34) in tRNA(Ile2) + AMP + diphosphate + H(+). Its function is as follows. Ligates lysine onto the cytidine present at position 34 of the AUA codon-specific tRNA(Ile) that contains the anticodon CAU, in an ATP-dependent manner. Cytidine is converted to lysidine, thus changing the amino acid specificity of the tRNA from methionine to isoleucine. The protein is tRNA(Ile)-lysidine synthase of Bradyrhizobium diazoefficiens (strain JCM 10833 / BCRC 13528 / IAM 13628 / NBRC 14792 / USDA 110).